The primary structure comprises 257 residues: UPF0246 protein swp_3736 (257 aa).

This sequence belongs to the UPF0246 family.

The sequence is that of UPF0246 protein swp_3736 from Shewanella piezotolerans (strain WP3 / JCM 13877).